The chain runs to 2925 residues: TPR and ankyrin repeat-containing protein 1 (2925 aa).

TPR repeat units lie at residues 15-48 (AVLLCNKSNAFFSLGKWNEAFVAAKECLQWDPTY) and 50-82 (KGYYRAGYSLLRLHQPYEAARMFFEGLRLVQRS). 6 ANK repeats span residues 168 to 198 (EKYVFIGLYEKMEQVPKLVQWLISIGASVET), 203 to 232 (PLHALMRLCIQARENHLFRWLMDHKPEWKG), 240 to 276 (DGCTVLHVVAAHSPGYLVKRQTEDVQMLLRFGADPTL), 463 to 492 (SQERPVVTCLKHEDFELAFLLLTKGADPRA), 497 to 518 (EGDTPLHAALHIFLEIKADIGF), and 546 to 575 (NGNTLMHILFQKGMLKRVKKLLDLLVKFDI). Disordered regions lie at residues 612–669 (SRQD…LPGT), 706–741 (PEDCLQSSEPLEAGAGKEGKKDDKPTLGAGAPDCSE), and 1077–1103 (VEPGKESPGGEEEEEEEDEEEEDSIEV). The segment covering 624-641 (SKSTAPGHTSQLKSQGSF) has biased composition (polar residues). Residues 720-730 (AGKEGKKDDKP) are compositionally biased toward basic and acidic residues. Residues 1085-1103 (GGEEEEEEEDEEEEDSIEV) are compositionally biased toward acidic residues. TPR repeat units follow at residues 1699–1732 (PAEWIAQGDYYAKHQCWKVAAKCYQKGGAFEKEK) and 1793–1826 (LGKIRDAAYFYKRSQCYKDAFRCFEQIQEFDLAL). The stretch at 2301 to 2330 (EEFEKLLHQEEDNYNRELKALESEKDERGR) forms a coiled coil.

The polypeptide is TPR and ankyrin repeat-containing protein 1 (TRANK1) (Homo sapiens (Human)).